The chain runs to 298 residues: Acetylglutamate kinase (298 aa).

Substrate contacts are provided by residues G69–G70, R91, and N196.

This sequence belongs to the acetylglutamate kinase family. ArgB subfamily.

It localises to the cytoplasm. The catalysed reaction is N-acetyl-L-glutamate + ATP = N-acetyl-L-glutamyl 5-phosphate + ADP. It functions in the pathway amino-acid biosynthesis; L-arginine biosynthesis; N(2)-acetyl-L-ornithine from L-glutamate: step 2/4. In terms of biological role, catalyzes the ATP-dependent phosphorylation of N-acetyl-L-glutamate. The polypeptide is Acetylglutamate kinase (Bradyrhizobium sp. (strain BTAi1 / ATCC BAA-1182)).